The sequence spans 87 residues: Putative protein KleG (87 aa).

Disordered stretches follow at residues 1 to 23 and 61 to 87; these read MRHS…WPSS and IPTT…IFSR. Residues 68–78 show a composition bias toward basic residues; it reads RGRRPQRHRPS.

The protein is Putative protein KleG (kleG) of Escherichia coli.